Consider the following 163-residue polypeptide: Glycine cleavage system H-like protein gcvH5, mitochondrial (163 aa).

The N-terminal 23 residues, 1–23, are a transit peptide targeting the mitochondrion; the sequence is MFLFKTTNNLRKSLSNKFFCTRY. Residues 50 to 136 form the Lipoyl-binding domain; sequence IGTLGLTENG…MSKGWLCKIK (87 aa).

It belongs to the GcvH family.

It localises to the mitochondrion. The sequence is that of Glycine cleavage system H-like protein gcvH5, mitochondrial (gcvH5) from Dictyostelium discoideum (Social amoeba).